The chain runs to 447 residues: Glutamate--tRNA ligase 1 (447 aa).

The short motif at 10-20 is the 'HIGH' region element; it reads PSPTGMLHVGN. A 'KMSKS' region motif is present at residues 240–244; the sequence is KISKR. Lys243 provides a ligand contact to ATP.

It belongs to the class-I aminoacyl-tRNA synthetase family. Glutamate--tRNA ligase type 1 subfamily. Monomer.

The protein resides in the cytoplasm. The enzyme catalyses tRNA(Glu) + L-glutamate + ATP = L-glutamyl-tRNA(Glu) + AMP + diphosphate. Catalyzes the attachment of glutamate to tRNA(Glu) in a two-step reaction: glutamate is first activated by ATP to form Glu-AMP and then transferred to the acceptor end of tRNA(Glu). This Rickettsia massiliae (strain Mtu5) protein is Glutamate--tRNA ligase 1.